A 299-amino-acid chain; its full sequence is 33 kDa chaperonin (299 aa).

2 cysteine pairs are disulfide-bonded: C238-C240 and C271-C274.

Belongs to the HSP33 family. In terms of processing, under oxidizing conditions two disulfide bonds are formed involving the reactive cysteines. Under reducing conditions zinc is bound to the reactive cysteines and the protein is inactive.

Its subcellular location is the cytoplasm. Its function is as follows. Redox regulated molecular chaperone. Protects both thermally unfolding and oxidatively damaged proteins from irreversible aggregation. Plays an important role in the bacterial defense system toward oxidative stress. The polypeptide is 33 kDa chaperonin (Alkaliphilus oremlandii (strain OhILAs) (Clostridium oremlandii (strain OhILAs))).